A 544-amino-acid chain; its full sequence is Aspartokinase 2, chloroplastic (544 aa).

The N-terminal 84 residues, 1–84 (MASLQLYGVK…SSGTGKELTC (84 aa)), are a transit peptide targeting the chloroplast. Residues lysine 87, glycine 90, and serine 119 each contribute to the ATP site. Substrate is bound at residue glutamate 203. ACT domains lie at 401 to 479 (IAST…RRSI) and 481 to 544 (SLIG…ETDP).

The protein belongs to the aspartokinase family. As to expression, expressed in stems, leaves, floral organs and young seedlings.

The protein localises to the plastid. It localises to the chloroplast. It carries out the reaction L-aspartate + ATP = 4-phospho-L-aspartate + ADP. The protein operates within amino-acid biosynthesis; L-lysine biosynthesis via DAP pathway; (S)-tetrahydrodipicolinate from L-aspartate: step 1/4. It functions in the pathway amino-acid biosynthesis; L-methionine biosynthesis via de novo pathway; L-homoserine from L-aspartate: step 1/3. Its pathway is amino-acid biosynthesis; L-threonine biosynthesis; L-threonine from L-aspartate: step 1/5. With respect to regulation, allosterically inhibited by lysine, but not by S-adenosyl-L-methionine (SAM). K(0.5) for lysine in the presence of physiological concentrations of substrates is 12.5 uM. No inhibition by threonine or leucine and no activation or inhibition by alanine, cysteine, isoleucine, serine, valine, methionine, glutamine, asparagine, glutamic acid or arginine. Its function is as follows. Involved in the first step of essential amino acids lysine, threonine, methionine and isoleucine synthesis via the aspartate-family pathway. The chain is Aspartokinase 2, chloroplastic (AK2) from Arabidopsis thaliana (Mouse-ear cress).